The primary structure comprises 319 residues: Sulfate adenylyltransferase subunit 2 (319 aa).

Disordered regions lie at residues 1 to 22 (MNPG…TRRP) and 296 to 319 (RGAT…EGYF).

Belongs to the PAPS reductase family. CysD subfamily.

The enzyme catalyses sulfate + ATP + H(+) = adenosine 5'-phosphosulfate + diphosphate. Its pathway is antibiotic biosynthesis; mitomycin C biosynthesis. Functionally, with CysN forms the ATP sulfurylase (ATPS) that catalyzes the adenylation of sulfate producing adenosine 5'-phosphosulfate (APS) and diphosphate, the first enzymatic step in sulfur assimilation pathway. APS synthesis involves the formation of a high-energy phosphoric-sulfuric acid anhydride bond driven by GTP hydrolysis by CysN coupled to ATP hydrolysis by CysD. In Streptomyces lavendulae, this protein is Sulfate adenylyltransferase subunit 2 (mmcV).